The following is a 321-amino-acid chain: Lipoyl synthase (321 aa).

[4Fe-4S] cluster contacts are provided by C68, C73, C79, C94, C98, C101, and S308. Residues 80–297 (FNHGTATFMI…KAEALAMGFT (218 aa)) enclose the Radical SAM core domain.

Belongs to the radical SAM superfamily. Lipoyl synthase family. [4Fe-4S] cluster serves as cofactor.

The protein resides in the cytoplasm. It catalyses the reaction [[Fe-S] cluster scaffold protein carrying a second [4Fe-4S](2+) cluster] + N(6)-octanoyl-L-lysyl-[protein] + 2 oxidized [2Fe-2S]-[ferredoxin] + 2 S-adenosyl-L-methionine + 4 H(+) = [[Fe-S] cluster scaffold protein] + N(6)-[(R)-dihydrolipoyl]-L-lysyl-[protein] + 4 Fe(3+) + 2 hydrogen sulfide + 2 5'-deoxyadenosine + 2 L-methionine + 2 reduced [2Fe-2S]-[ferredoxin]. The protein operates within protein modification; protein lipoylation via endogenous pathway; protein N(6)-(lipoyl)lysine from octanoyl-[acyl-carrier-protein]: step 2/2. In terms of biological role, catalyzes the radical-mediated insertion of two sulfur atoms into the C-6 and C-8 positions of the octanoyl moiety bound to the lipoyl domains of lipoate-dependent enzymes, thereby converting the octanoylated domains into lipoylated derivatives. This is Lipoyl synthase from Escherichia coli O9:H4 (strain HS).